The chain runs to 220 residues: Protein ABA DEFICIENT 4, chloroplastic (220 aa).

Residues 1 to 37 constitute a chloroplast transit peptide; that stretch reads MGFSSFISQPLSSSLSVMKRNVSAKRSELCLDSSKIR. A run of 4 helical transmembrane segments spans residues 77–97, 112–132, 154–174, and 195–215; these read IASSVFAVGTTAVLPFYTLMV, SVPYIILGVLYVYLLYISWTP, MFSSEMTLASAWIHLLVVDLF, and SLCLLFCPVGIVSHFVTKAII.

In terms of tissue distribution, expressed in root vasculature, root hairs, leaves, trichomes, sepals, stamens, stigma, pedicels, siliques and embryo.

It is found in the plastid. Its subcellular location is the chloroplast membrane. Its function is as follows. Required for neoxanthin biosynthesis, an intermediary step in abscisic acid (ABA) biosynthesis. Probably not involved directly in the enzymatic conversion of violaxanthin to neoxanthin. Cannot convert violaxanthin to neoxanthin in vitro. Required for ABA biosynthesis in response to drought stress. Required for neoxanthin biosynthesis which is involved in photoprotection of photosystem II (PSII). Neoxanthin acts as an antioxidant within the photosystem PSII supercomplex. The chain is Protein ABA DEFICIENT 4, chloroplastic from Arabidopsis thaliana (Mouse-ear cress).